Consider the following 402-residue polypeptide: Tyrosine--tRNA ligase (402 aa).

The short motif at 48–57 is the 'HIGH' region element; that stretch reads PTGSDIHLGH. Residues 235–239 carry the 'KMSKS' region motif; the sequence is KMSKS. K238 is a binding site for ATP. One can recognise an S4 RNA-binding domain in the interval 338–402; that stretch reads AKAFYLVSAV…GKKKFVRLVL (65 aa).

This sequence belongs to the class-I aminoacyl-tRNA synthetase family. TyrS type 2 subfamily. As to quaternary structure, homodimer.

The protein resides in the cytoplasm. The enzyme catalyses tRNA(Tyr) + L-tyrosine + ATP = L-tyrosyl-tRNA(Tyr) + AMP + diphosphate + H(+). Its function is as follows. Catalyzes the attachment of tyrosine to tRNA(Tyr) in a two-step reaction: tyrosine is first activated by ATP to form Tyr-AMP and then transferred to the acceptor end of tRNA(Tyr). This is Tyrosine--tRNA ligase from Synechococcus elongatus (strain ATCC 33912 / PCC 7942 / FACHB-805) (Anacystis nidulans R2).